The chain runs to 103 residues: Large ribosomal subunit protein eL21 (103 aa).

Belongs to the eukaryotic ribosomal protein eL21 family.

The polypeptide is Large ribosomal subunit protein eL21 (Sulfolobus acidocaldarius (strain ATCC 33909 / DSM 639 / JCM 8929 / NBRC 15157 / NCIMB 11770)).